A 619-amino-acid chain; its full sequence is TOX high mobility group box family member 4 (619 aa).

Disordered regions lie at residues 155 to 227, 304 to 335, and 436 to 458; these read LSLG…QKPV, ELDPVPQSQTPSPPPVTTADPASPAPASTESP, and LPPPRLQPPPLQQMPQPPTQQQV. Residue Thr176 is modified to Phosphothreonine. Phosphoserine occurs at positions 178 and 182. Over residues 183-193 the composition is skewed to basic and acidic residues; the sequence is LHEDGVDDFRR. The span at 208–218 shows a compositional bias: basic residues; sequence KQKAPKKRKKK. The short motif at 213 to 218 is the Nuclear localization signal element; it reads KKRKKK. Residues 223 to 291 constitute a DNA-binding region (HMG box); that stretch reads PQKPVSAYAL…EYLKALAAYK (69 aa). Thr313 is subject to Phosphothreonine. Residue Ser315 is modified to Phosphoserine. The segment covering 320 to 335 has biased composition (low complexity); that stretch reads TTADPASPAPASTESP. A compositionally biased stretch (pro residues) spans 436–453; it reads LPPPRLQPPPLQQMPQPP. Arg479 is modified (asymmetric dimethylarginine). Phosphoserine occurs at positions 531, 548, 550, 558, 560, and 565.

As to quaternary structure, component of the PNUTS-PP1 phosphatase complex, composed of PPP1R10/PNUTS, TOX4, WDR82 and PPP1CA or PPP1CB or PPP1CC. Interacts with PPP1R10/PNUTS. Interacts with FOXO1 and CREB1 (increased by cAMP); FOXO1 and CREB1 are required for full induction of TOX4-dependent activity and the interactions are inhibited by insulin.

It localises to the nucleus. The protein resides in the chromosome. In liver, recruited to target gene promoters following treatment with dexamethasone and cAMP. Binding is decreased in presence of insulin. Functionally, transcription factor that modulates cell fate reprogramming from the somatic state to the pluripotent and neuronal fate. In liver, controls the expression of hormone-regulated gluconeogenic genes such as G6PC1 and PCK1. This regulation is independent of the insulin receptor activation. Also acts as a regulatory component of protein phosphatase 1 (PP1) complexes. Component of the PNUTS-PP1 protein phosphatase complex, a PP1 complex that regulates RNA polymerase II transcription pause-release. PNUTS-PP1 also plays a role in the control of chromatin structure and cell cycle progression during the transition from mitosis into interphase. This Rattus norvegicus (Rat) protein is TOX high mobility group box family member 4 (Tox4).